Reading from the N-terminus, the 254-residue chain is Triosephosphate isomerase (254 aa).

Residue 9–11 coordinates substrate; that stretch reads NWK. The active-site Electrophile is the His95. Glu167 serves as the catalytic Proton acceptor. Substrate-binding positions include Gly173, Ser213, and 234 to 235; that span reads GG.

This sequence belongs to the triosephosphate isomerase family. In terms of assembly, homodimer.

It is found in the cytoplasm. It catalyses the reaction D-glyceraldehyde 3-phosphate = dihydroxyacetone phosphate. It participates in carbohydrate biosynthesis; gluconeogenesis. It functions in the pathway carbohydrate degradation; glycolysis; D-glyceraldehyde 3-phosphate from glycerone phosphate: step 1/1. In terms of biological role, involved in the gluconeogenesis. Catalyzes stereospecifically the conversion of dihydroxyacetone phosphate (DHAP) to D-glyceraldehyde-3-phosphate (G3P). The protein is Triosephosphate isomerase of Roseiflexus sp. (strain RS-1).